The primary structure comprises 567 residues: Urease subunit alpha (567 aa).

The region spanning Gly129–Phe567 is the Urease domain. Ni(2+) contacts are provided by His134, His136, and Lys217. Lys217 is subject to N6-carboxylysine. His219 is a binding site for substrate. Residues His246 and His272 each contribute to the Ni(2+) site. The active-site Proton donor is His320. A Ni(2+)-binding site is contributed by Asp360.

It belongs to the metallo-dependent hydrolases superfamily. Urease alpha subunit family. In terms of assembly, heterotrimer of UreA (gamma), UreB (beta) and UreC (alpha) subunits. Three heterotrimers associate to form the active enzyme. Ni cation serves as cofactor. Carboxylation allows a single lysine to coordinate two nickel ions.

Its subcellular location is the cytoplasm. The catalysed reaction is urea + 2 H2O + H(+) = hydrogencarbonate + 2 NH4(+). Its pathway is nitrogen metabolism; urea degradation; CO(2) and NH(3) from urea (urease route): step 1/1. This is Urease subunit alpha from Teredinibacter turnerae (strain ATCC 39867 / T7901).